The following is a 180-amino-acid chain: NADH-quinone oxidoreductase subunit I (180 aa).

2 consecutive 4Fe-4S ferredoxin-type domains span residues Ile48–Ala80 and Glu90–Asp119. Residues Cys60, Cys63, Cys66, Cys70, Cys99, Cys102, Cys105, and Cys109 each coordinate [4Fe-4S] cluster. Residues Gly160–Pro180 are disordered.

Belongs to the complex I 23 kDa subunit family. In terms of assembly, NDH-1 is composed of 14 different subunits. Subunits NuoA, H, J, K, L, M, N constitute the membrane sector of the complex. It depends on [4Fe-4S] cluster as a cofactor.

It localises to the cell inner membrane. It catalyses the reaction a quinone + NADH + 5 H(+)(in) = a quinol + NAD(+) + 4 H(+)(out). In terms of biological role, NDH-1 shuttles electrons from NADH, via FMN and iron-sulfur (Fe-S) centers, to quinones in the respiratory chain. The immediate electron acceptor for the enzyme in this species is believed to be ubiquinone. Couples the redox reaction to proton translocation (for every two electrons transferred, four hydrogen ions are translocated across the cytoplasmic membrane), and thus conserves the redox energy in a proton gradient. This Tolumonas auensis (strain DSM 9187 / NBRC 110442 / TA 4) protein is NADH-quinone oxidoreductase subunit I.